A 339-amino-acid chain; its full sequence is Putative agmatine deiminase (339 aa).

Residue cysteine 331 is the Amidino-cysteine intermediate of the active site.

It belongs to the agmatine deiminase family.

It carries out the reaction agmatine + H2O = N-carbamoylputrescine + NH4(+). This chain is Putative agmatine deiminase, found in Streptomyces coelicolor (strain ATCC BAA-471 / A3(2) / M145).